Consider the following 142-residue polypeptide: Large ribosomal subunit protein uL13 (142 aa).

Belongs to the universal ribosomal protein uL13 family. Part of the 50S ribosomal subunit.

Its function is as follows. This protein is one of the early assembly proteins of the 50S ribosomal subunit, although it is not seen to bind rRNA by itself. It is important during the early stages of 50S assembly. The sequence is that of Large ribosomal subunit protein uL13 from Chromobacterium violaceum (strain ATCC 12472 / DSM 30191 / JCM 1249 / CCUG 213 / NBRC 12614 / NCIMB 9131 / NCTC 9757 / MK).